We begin with the raw amino-acid sequence, 187 residues long: Elongation factor P (187 aa).

The protein belongs to the elongation factor P family.

The protein resides in the cytoplasm. The protein operates within protein biosynthesis; polypeptide chain elongation. In terms of biological role, involved in peptide bond synthesis. Stimulates efficient translation and peptide-bond synthesis on native or reconstituted 70S ribosomes in vitro. Probably functions indirectly by altering the affinity of the ribosome for aminoacyl-tRNA, thus increasing their reactivity as acceptors for peptidyl transferase. This Corynebacterium jeikeium (strain K411) protein is Elongation factor P.